The sequence spans 992 residues: Disks large-associated protein 4 (992 aa).

Residues 1–20 are compositionally biased toward basic and acidic residues; it reads MKGLGDSRPRHLSDSLDPPH. Disordered regions lie at residues 1–30, 47–66, and 157–206; these read MKGLGDSRPRHLSDSLDPPHEPLFAGTDRN, PGQNTLPGDGLFPLNNQLPP, and LEGT…GWWS. The segment covering 162-171 has biased composition (gly residues); sequence GKVGGNGSKK. The segment covering 172 to 194 has biased composition (basic and acidic residues); sequence GGMEDGKGRRAKSKERAKAGEPK. 2 positions are modified to phosphoserine: Ser206 and Ser207. An Omega-N-methylarginine modification is found at Arg291. Residues 342–396 form a disordered region; that stretch reads STTLLSPRETDAAAEGPIPCRRMRSGSYIKAMGDEDSDESGGSPKPSPKTAARRQ. Residues Ser378, Ser381, Ser388, Ser405, Ser415, and Ser421 each carry the phosphoserine modification. Disordered stretches follow at residues 527 to 751, 763 to 798, and 915 to 992; these read SVSL…GPRQ, SYGDNSDPALEASSLPPPDPWLETSSSSPAEPAQPG, and TPEK…QTRL. Positions 528–554 are enriched in low complexity; sequence VSLQSLSPPPSTGSLSNSRTLPSSSCL. Over residues 576–591 the composition is skewed to polar residues; it reads VTVQSSTESAQDTYLD. A phosphoserine mark is found at Ser580, Ser581, Ser609, Ser611, Ser665, and Ser744. Residues 600-620 show a composition bias toward low complexity; the sequence is TSQSGLSNSSDSLDSSTRPPS. A Phosphothreonine modification is found at Thr915. Composition is skewed to basic and acidic residues over residues 915–925 and 940–958; these read TPEKRKEEKKP and VSRDKASDASDKQRQEARK. A compositionally biased stretch (polar residues) spans 969–978; sequence VRQNSATESA. Ser973 is subject to Phosphoserine.

This sequence belongs to the SAPAP family. In terms of assembly, interacts with DLG1 and DLG4/PSD-95.

The protein resides in the membrane. Functionally, may play a role in the molecular organization of synapses and neuronal cell signaling. Could be an adapter protein linking ion channel to the subsynaptic cytoskeleton. May induce enrichment of PSD-95/SAP90 at the plasma membrane. The protein is Disks large-associated protein 4 (DLGAP4) of Homo sapiens (Human).